A 239-amino-acid chain; its full sequence is Leucyl/phenylalanyl-tRNA--protein transferase (239 aa).

This sequence belongs to the L/F-transferase family.

Its subcellular location is the cytoplasm. The catalysed reaction is N-terminal L-lysyl-[protein] + L-leucyl-tRNA(Leu) = N-terminal L-leucyl-L-lysyl-[protein] + tRNA(Leu) + H(+). It carries out the reaction N-terminal L-arginyl-[protein] + L-leucyl-tRNA(Leu) = N-terminal L-leucyl-L-arginyl-[protein] + tRNA(Leu) + H(+). The enzyme catalyses L-phenylalanyl-tRNA(Phe) + an N-terminal L-alpha-aminoacyl-[protein] = an N-terminal L-phenylalanyl-L-alpha-aminoacyl-[protein] + tRNA(Phe). Functionally, functions in the N-end rule pathway of protein degradation where it conjugates Leu, Phe and, less efficiently, Met from aminoacyl-tRNAs to the N-termini of proteins containing an N-terminal arginine or lysine. In Aliivibrio fischeri (strain ATCC 700601 / ES114) (Vibrio fischeri), this protein is Leucyl/phenylalanyl-tRNA--protein transferase.